The primary structure comprises 416 residues: Histidinol dehydrogenase (416 aa).

Positions 117, 178, and 201 each coordinate NAD(+). 3 residues coordinate substrate: T224, Q246, and H249. Zn(2+) contacts are provided by Q246 and H249. Catalysis depends on proton acceptor residues E314 and H315. Substrate-binding residues include H315, D348, E402, and H407. Residue D348 participates in Zn(2+) binding. H407 is a binding site for Zn(2+).

This sequence belongs to the histidinol dehydrogenase family. Zn(2+) serves as cofactor.

It carries out the reaction L-histidinol + 2 NAD(+) + H2O = L-histidine + 2 NADH + 3 H(+). It functions in the pathway amino-acid biosynthesis; L-histidine biosynthesis; L-histidine from 5-phospho-alpha-D-ribose 1-diphosphate: step 9/9. Its function is as follows. Catalyzes the sequential NAD-dependent oxidations of L-histidinol to L-histidinaldehyde and then to L-histidine. The chain is Histidinol dehydrogenase from Staphylococcus aureus (strain Mu50 / ATCC 700699).